The chain runs to 502 residues: Probable cytosol aminopeptidase (502 aa).

Mn(2+) contacts are provided by K270 and D275. The active site involves K282. Positions 293, 352, and 354 each coordinate Mn(2+). R356 is a catalytic residue.

Belongs to the peptidase M17 family. The cofactor is Mn(2+).

Its subcellular location is the cytoplasm. It catalyses the reaction Release of an N-terminal amino acid, Xaa-|-Yaa-, in which Xaa is preferably Leu, but may be other amino acids including Pro although not Arg or Lys, and Yaa may be Pro. Amino acid amides and methyl esters are also readily hydrolyzed, but rates on arylamides are exceedingly low.. The catalysed reaction is Release of an N-terminal amino acid, preferentially leucine, but not glutamic or aspartic acids.. Its function is as follows. Presumably involved in the processing and regular turnover of intracellular proteins. Catalyzes the removal of unsubstituted N-terminal amino acids from various peptides. The protein is Probable cytosol aminopeptidase of Desulfotalea psychrophila (strain LSv54 / DSM 12343).